The following is a 563-amino-acid chain: Pyruvate decarboxylase isozyme 2 (563 aa).

4 residues coordinate pyruvate: D28, H115, Y157, and R224. Thiamine diphosphate contacts are provided by residues T390 and 413 to 415; that span reads GSI. D444 lines the Mg(2+) pocket. Thiamine diphosphate-binding positions include 445-446 and 471-476; these read GS and NNGYTI. Mg(2+)-binding residues include N471 and G473. E477 lines the pyruvate pocket.

It belongs to the TPP enzyme family. In terms of assembly, homotetramer. Mg(2+) serves as cofactor. Thiamine diphosphate is required as a cofactor.

Its subcellular location is the cytoplasm. It is found in the nucleus. The enzyme catalyses pyruvate + H(+) = acetaldehyde + CO2. The catalysed reaction is 3-methyl-2-oxobutanoate + H(+) = 2-methylpropanal + CO2. It catalyses the reaction (S)-3-methyl-2-oxopentanoate + H(+) = 2-methylbutanal + CO2. It carries out the reaction indole-3-pyruvate + H(+) = indole-3-acetaldehyde + CO2. The enzyme catalyses 3-phenylpyruvate + H(+) = 2-phenylacetaldehyde + CO2. The catalysed reaction is 2-oxobutanoate + H(+) = propanal + CO2. It catalyses the reaction 2-oxopentanoate + H(+) = butanal + CO2. It carries out the reaction 2 acetaldehyde = acetoin. The enzyme catalyses acetaldehyde + pyruvate + H(+) = acetoin + CO2. Its pathway is fermentation; ethanol fermentation. The protein operates within amino-acid degradation; Ehrlich pathway. Allosterically activated by its substrate, pyruvate. Functionally, second most abundant of three pyruvate decarboxylases (PDC1, PDC5, PDC6) implicated in the nonoxidative conversion of pyruvate to acetaldehyde and carbon dioxide during alcoholic fermentation. Most of the produced acetaldehyde is subsequently reduced to ethanol, but some is required for cytosolic acetyl-CoA production for biosynthetic pathways. The enzyme is also one of five 2-oxo acid decarboxylases (PDC1, PDC5, PDC6, ARO10, and THI3) able to decarboxylate more complex 2-oxo acids (alpha-keto-acids) than pyruvate, which seem mainly involved in amino acid catabolism. Here the enzyme catalyzes the decarboxylation of amino acids, which, in a first step, have been transaminated to the corresponding 2-oxo acids. In a third step, the resulting aldehydes are reduced to alcohols, collectively referred to as fusel oils or alcohols. Its preferred substrates are the transaminated amino acids derived from threonine (2-oxobutanoate), norvaline (2-oxopentanoate), valine (3-methyl-2-oxobutanoate, also alpha-keto-isovalerate), isoleucine ((3S)-3-methyl-2-oxopentanoate, also alpha-keto-beta-methylvalerate), phenylalanine (phenylpyruvate), and tryptophan (3-(indol-3-yl)pyruvate), whereas transaminated leucine is no substrate. In a side-reaction the carbanionic intermediate (or active aldehyde) generated by decarboxylation or by activation of an aldehyde can react with an aldehyde via condensation (or carboligation) yielding a 2-hydroxy ketone, collectively called acyloins. This is Pyruvate decarboxylase isozyme 2 (PDC5) from Saccharomyces cerevisiae (strain ATCC 204508 / S288c) (Baker's yeast).